The primary structure comprises 687 residues: Amine oxidase [copper-containing] gamma 2 (687 aa).

A signal peptide spans 1–24 (MVELSFSQLLVLLLSLLFLFTTLA). Asn-154 is a glycosylation site (N-linked (GlcNAc...) asparagine). A disulfide bridge connects residues Cys-169 and Cys-191. Asn-244 carries an N-linked (GlcNAc...) asparagine glycan. 333–344 (YMDAGEFGLGPS) contacts substrate. The active-site Proton acceptor is the Asp-335. A disulfide bridge links Cys-354 with Cys-380. 420 to 425 (VGNYDY) contributes to the substrate binding site. Tyr-423 serves as the catalytic Schiff-base intermediate with substrate; via topaquinone. 2',4',5'-topaquinone is present on Tyr-423. Cu cation-binding residues include His-480 and His-482. Asp-489, Met-490, and Asp-491 together coordinate Mn(2+). Asn-497 and Asn-598 each carry an N-linked (GlcNAc...) asparagine glycan. Mn(2+) contacts are provided by Asp-632 and Ile-633. His-643 lines the Cu cation pocket.

The protein belongs to the copper/topaquinone oxidase family. In terms of assembly, homodimer. Cu cation serves as cofactor. It depends on Zn(2+) as a cofactor. The cofactor is L-topaquinone. Requires Mn(2+) as cofactor. Topaquinone (TPQ) is generated by copper-dependent autoxidation of a specific tyrosyl residue. As to expression, expressed in roots, leaves and cotyledons.

It localises to the secreted. Its subcellular location is the extracellular space. The protein resides in the apoplast. It carries out the reaction a primary methyl amine + O2 + H2O = an aldehyde + H2O2 + NH4(+). The protein operates within amine and polyamine degradation; putrescine degradation. Copper amine oxidase that can use putrescine and spermidine as substrates. The polypeptide is Amine oxidase [copper-containing] gamma 2 (Arabidopsis thaliana (Mouse-ear cress)).